The sequence spans 20 residues: Venom prothrombin activator notanarin-D (20 aa).

Residues 1–10 (SNSLFEEVRP) enclose the Gla domain. A 4-carboxyglutamate mark is found at Glu-6 and Glu-7. In terms of domain architecture, Peptidase S1 spans 11 to 20 (IVNGMDCKLG).

This sequence belongs to the peptidase S1 family. Snake venom subfamily. In terms of assembly, heterodimer of a light chain and a heavy chain; disulfide-linked. In terms of processing, gamma-carboxyglutamate residues are formed by vitamin K dependent carboxylation. These residues are essential for the binding of calcium. In terms of tissue distribution, expressed by the venom gland.

It is found in the secreted. The catalysed reaction is Selective cleavage of Arg-|-Thr and then Arg-|-Ile bonds in prothrombin to form thrombin.. Its function is as follows. Snake prothrombin activator that attacks the hemostatic system of prey. This protein is functionally similar to blood coagulation factor Xa. This is Venom prothrombin activator notanarin-D from Notechis scutatus niger (Peninsula tiger snake).